The chain runs to 1389 residues: MGNLFGHKRWYEVRDKKDFKIKRKVKVKRNYDGNKYILNINENNNKEKIDNNKFIRKYINYKKNDNILKEFTRKFHAGNILFKLKGKEGIIRIENNDDFLETEEVVLYIEAYGKSEKLKALGITKKKIIDEAIRQGITKDDKKIEIKRQENEEEIEIDIRDEYTNKTLNDCSIILRIIENDELETKKSIYEIFKNINMSLYKIIEKIIENETEKVFENRYYEEHLREKLLKDDKIDVILTNFMEIREKIKSNLEILGFVKFYLNVGGDKKKSKNKKMLVEKILNINVDLTVEDIADFVIKELEFWNITKRIEKVKKVNNEFLEKRRNRTYIKSYVLLDKHEKFKIERENKKDKIVKFFVENIKNNSIKEKIEKILAEFKIDELIKKLEKELKKGNCDTEIFGIFKKHYKVNFDSKKFSKKSDEEKELYKIIYRYLKGRIEKILVNEQKVRLKKMEKIEIEKILNESILSEKILKRVKQYTLEHIMYLGKLRHNDIDMTTVNTDDFSRLHAKEELDLELITFFASTNMELNKIFSRENINNDENIDFFGGDREKNYVLDKKILNSKIKIIRDLDFIDNKNNITNNFIRKFTKIGTNERNRILHAISKERDLQGTQDDYNKVINIIQNLKISDEEVSKALNLDVVFKDKKNIITKINDIKISEENNNDIKYLPSFSKVLPEILNLYRNNPKNEPFDTIETEKIVLNALIYVNKELYKKLILEDDLEENESKNIFLQELKKTLGNIDEIDENIIENYYKNAQISASKGNNKAIKKYQKKVIECYIGYLRKNYEELFDFSDFKMNIQEIKKQIKDINDNKTYERITVKTSDKTIVINDDFEYIISIFALLNSNAVINKIRNRFFATSVWLNTSEYQNIIDILDEIMQLNTLRNECITENWNLNLEEFIQKMKEIEKDFDDFKIQTKKEIFNNYYEDIKNNILTEFKDDINGCDVLEKKLEKIVIFDDETKFEIDKKSNILQDEQRKLSNINKKDLKKKVDQYIKDKDQEIKSKILCRIIFNSDFLKKYKKEIDNLIEDMESENENKFQEIYYPKERKNELYIYKKNLFLNIGNPNFDKIYGLISNDIKMADAKFLFNIDGKNIRKNKISEIDAILKNLNDKLNGYSKEYKEKYIKKLKENDDFFAKNIQNKNYKSFEKDYNRVSEYKKIRDLVEFNYLNKIESYLIDINWKLAIQMARFERDMHYIVNGLRELGIIKLSGYNTGISRAYPKRNGSDGFYTTTAYYKFFDEESYKKFEKICYGFGIDLSENSEINKPENESIRNYISHFYIVRNPFADYSIAEQIDRVSNLLSYSTRYNNSTYASVFEVFKKDVNLDYDELKKKFKLIGNNDILERLMKPKKVSVLELESYNSDYIKNLIIELLTKIENTNDTL.

The NTD stretch occupies residues 1–347; the sequence is MGNLFGHKRW…DKHEKFKIER (347 aa). Arg219 is a binding site for crRNA. Binds crRNA stretches follow at residues 330–342, 405–408, and 432–436; these read YIKS…KHEK, KKHY, and YRYLK. Positions 348–498 are helical-1; the sequence is ENKKDKIVKF…KLRHNDIDMT (151 aa). Residues Arg438 and Lys441 each act as for pre-crRNA processing in the active site. Lys441 is a binding site for crRNA. Residues 471 to 475 form a binds crRNA region; that stretch reads KILKR. Residue Lys489 coordinates crRNA. The segment at 499 to 636 is HEPN-like fold 1-I; the sequence is TVNTDDFSRL…LKISDEEVSK (138 aa). The interval 502–509 is binds crRNA; the sequence is TDDFSRLH. Residues Arg597 and His602 each act as for target ssRNA cleavage in the active site. Positions 637–828 are helical-2; the sequence is ALNLDVVFKD…ERITVKTSDK (192 aa). Residue Gln759 participates in crRNA binding. An HEPN-like fold 1-II region spans residues 829-899; sequence TIVINDDFEY…ECITENWNLN (71 aa). The binds crRNA stretch occupies residues 853-858; sequence NKIRNR. Trp865 lines the crRNA pocket. Coiled-coil stretches lie at residues 893–920, 968–1046, and 1101–1131; these read TENW…FKIQ, EIDK…FQEI, and KNKI…KYIK. The interval 900–1170 is linker; that stretch reads LEEFIQKMKE…EYKKIRDLVE (271 aa). Residues 1170–1290 are HEPN-like fold 2; the sequence is EFNYLNKIES…ISHFYIVRNP (121 aa). Residues Arg1278 and His1283 each act as for target ssRNA cleavage in the active site. Binds crRNA stretches follow at residues 1311–1316 and 1338–1339; these read TRYNNS and KK.

Belongs to the CRISPR-associated endoribonuclease Cas13a family. In terms of assembly, monomer. Mg(2+) is required as a cofactor.

With respect to regulation, RNase activity on target is decreased by EDTA. Target RNA acts as an activator for non-specific ssRNA degradation. CRISPR (clustered regularly interspaced short palindromic repeat), is an adaptive immune system that provides protection against mobile genetic elements (viruses, transposable elements and conjugative plasmids). CRISPR clusters contain sequences complementary to antecedent mobile elements (spacers) and target invading nucleic acids. Unlike many single-component effectors, this CRISPR-Cas system targets RNA. CRISPR clusters are transcribed from pre-CRISPR RNA (crRNA) and processed into crRNA (optimally 28 nucleotides in this system) by this protein. This protein processes pre-crRNA at a 'non-typical' site 1 nucleotide upstream of the pre-crRNA stem-loop; it cleaves pre-crRNA from L.buccalis and L.wadei in a similar fashion, whereas the enzymes from the latter 2 bacteria cleave their own pre-crRNA 3 nt further upstream. When the appropriate target sequences are cloned into the CRISPR array, confers immunity to ssRNA(+) enterobacteria phage MS2. Cleaves linear target ssRNA in a crRNA-dependent fashion, preferentially before U residues; has no activity on partially dsRNA, ssDNA or dsDNA. RNA secondary structure surrounding the target influence the cleavage site and efficiency; unlike other CRISPR-Cas effectors Cas13a cleaves outside of the crRNA binding site. In the presence of a viable RNA target other RNAs are also degraded (called collateral RNA degradation), suggesting this type of CRISPR-Cas might also prevent viral spread by inducing programmed cell death or dormancy. This system has a 3' protospacer flanking site (PFS), it does not cleave when the 3' PFS is G (PFS is equivalent to PAM, the protospacer adjacent motif). Mutations of its active site residues results in an RNA-programmed RNA-binding protein. This is CRISPR-associated endoribonuclease Cas13a from Leptotrichia shahii (strain DSM 19757 / CCUG 47503 / CIP 107916 / JCM 16776 / LB37).